A 321-amino-acid chain; its full sequence is Lipoyl synthase (321 aa).

Positions 68, 73, 79, 94, 98, 101, and 308 each coordinate [4Fe-4S] cluster. One can recognise a Radical SAM core domain in the interval 80 to 297 (FNHGTATFMI…KEIALELGFT (218 aa)).

This sequence belongs to the radical SAM superfamily. Lipoyl synthase family. It depends on [4Fe-4S] cluster as a cofactor.

The protein resides in the cytoplasm. It carries out the reaction [[Fe-S] cluster scaffold protein carrying a second [4Fe-4S](2+) cluster] + N(6)-octanoyl-L-lysyl-[protein] + 2 oxidized [2Fe-2S]-[ferredoxin] + 2 S-adenosyl-L-methionine + 4 H(+) = [[Fe-S] cluster scaffold protein] + N(6)-[(R)-dihydrolipoyl]-L-lysyl-[protein] + 4 Fe(3+) + 2 hydrogen sulfide + 2 5'-deoxyadenosine + 2 L-methionine + 2 reduced [2Fe-2S]-[ferredoxin]. Its pathway is protein modification; protein lipoylation via endogenous pathway; protein N(6)-(lipoyl)lysine from octanoyl-[acyl-carrier-protein]: step 2/2. Its function is as follows. Catalyzes the radical-mediated insertion of two sulfur atoms into the C-6 and C-8 positions of the octanoyl moiety bound to the lipoyl domains of lipoate-dependent enzymes, thereby converting the octanoylated domains into lipoylated derivatives. This Vibrio cholerae serotype O1 (strain ATCC 39541 / Classical Ogawa 395 / O395) protein is Lipoyl synthase.